The following is a 283-amino-acid chain: Pantothenate synthetase (283 aa).

Position 34–41 (34–41) interacts with ATP; the sequence is MGALHDGH. Histidine 41 functions as the Proton donor in the catalytic mechanism. Residue glutamine 65 participates in (R)-pantoate binding. Beta-alanine is bound at residue glutamine 65. 152 to 155 lines the ATP pocket; that stretch reads GSKD. Position 158 (glutamine 158) interacts with (R)-pantoate. Residues isoleucine 181 and 189-192 contribute to the ATP site; that span reads MSSR.

Belongs to the pantothenate synthetase family. As to quaternary structure, homodimer.

It is found in the cytoplasm. The catalysed reaction is (R)-pantoate + beta-alanine + ATP = (R)-pantothenate + AMP + diphosphate + H(+). It participates in cofactor biosynthesis; (R)-pantothenate biosynthesis; (R)-pantothenate from (R)-pantoate and beta-alanine: step 1/1. Catalyzes the condensation of pantoate with beta-alanine in an ATP-dependent reaction via a pantoyl-adenylate intermediate. In Rhodopseudomonas palustris (strain HaA2), this protein is Pantothenate synthetase.